Consider the following 515-residue polypeptide: Hyccin (515 aa).

Positions 358-378 are enriched in low complexity; the sequence is STSQSALSNSSNTSSKNLLGK. Disordered regions lie at residues 358-410 and 491-515; these read STSQ…TQRA and TDLPVLSKQPNQQRPPSISITLSTD. The span at 389-403 shows a compositional bias: basic and acidic residues; sequence AGREKEGETCREHLS. Residues 498–515 are compositionally biased toward polar residues; sequence KQPNQQRPPSISITLSTD.

Belongs to the Hyccin family. Component of a phosphatidylinositol 4-kinase (PI4K) complex.

The protein resides in the cytoplasm. It localises to the cytosol. Its subcellular location is the cell membrane. Its function is as follows. Component of a complex required to localize phosphatidylinositol 4-kinase (PI4K) to the plasma membrane. The complex acts as a regulator of phosphatidylinositol 4-phosphate (PtdIns(4)P) synthesis. The sequence is that of Hyccin (HYCC1) from Gallus gallus (Chicken).